A 338-amino-acid polypeptide reads, in one-letter code: Taste receptor type 2 member 39 (338 aa).

Over 1–30 the chain is Extracellular; that stretch reads MLGRCFPPDTKEKQQLRMTKLCDPAESELS. The helical transmembrane segment at 31–51 threads the bilayer; it reads PFLITLILAVLLAEYLIGIIA. Residues 52–74 are Cytoplasmic-facing; the sequence is NGFIMAIHAAEWVQNKAVSTSGR. Residues 75 to 95 form a helical membrane-spanning segment; it reads ILVFLSVSRIALQSLMMLEIT. The Extracellular portion of the chain corresponds to 96 to 116; sequence ISSTSLSFYSEDAVYYAFKIS. The chain crosses the membrane as a helical span at residues 117 to 137; sequence FIFLNFCSLWFAAWLSFFYFV. Over 138–156 the chain is Cytoplasmic; it reads KIANFSYPLFLKLRWRITG. A helical transmembrane segment spans residues 157-177; sequence LIPWLLWLSVFISFSHSMFCI. Topologically, residues 178–205 are extracellular; that stretch reads NICTVYCNNSFPIHSSNSTKKTYLSEIN. N-linked (GlcNAc...) asparagine glycosylation is found at Asn185 and Asn194. A helical membrane pass occupies residues 206 to 226; sequence VVGLAFFFNLGIVTPLIMFIL. Over 227 to 262 the chain is Cytoplasmic; the sequence is TATLLILSLKRHTLHMGSNATGSNDPSMEAHMGAIK. A helical membrane pass occupies residues 263-283; that stretch reads AISYFLILYIFNAVALFIYLS. The Extracellular portion of the chain corresponds to 284–291; it reads NMFDINSL. Residues 292 to 312 form a helical membrane-spanning segment; the sequence is WNNLCQIIMAAYPASHSILLI. Over 313–338 the chain is Cytoplasmic; the sequence is QDNPGLRRAWKRLQLRLHLYPKEWTL.

Belongs to the G-protein coupled receptor T2R family. As to expression, expressed in subsets of taste receptor cells of the tongue and exclusively in gustducin-positive cells.

It localises to the membrane. In terms of biological role, receptor that may play a role in the perception of bitterness and is gustducin-linked. May play a role in sensing the chemical composition of the gastrointestinal content. The activity of this receptor may stimulate alpha gustducin, mediate PLC-beta-2 activation and lead to the gating of TRPM5. This chain is Taste receptor type 2 member 39 (TAS2R39), found in Homo sapiens (Human).